A 249-amino-acid polypeptide reads, in one-letter code: Aspartate/glutamate leucyltransferase (249 aa).

The protein belongs to the R-transferase family. Bpt subfamily.

It is found in the cytoplasm. The enzyme catalyses N-terminal L-glutamyl-[protein] + L-leucyl-tRNA(Leu) = N-terminal L-leucyl-L-glutamyl-[protein] + tRNA(Leu) + H(+). The catalysed reaction is N-terminal L-aspartyl-[protein] + L-leucyl-tRNA(Leu) = N-terminal L-leucyl-L-aspartyl-[protein] + tRNA(Leu) + H(+). In terms of biological role, functions in the N-end rule pathway of protein degradation where it conjugates Leu from its aminoacyl-tRNA to the N-termini of proteins containing an N-terminal aspartate or glutamate. This Brucella melitensis biotype 2 (strain ATCC 23457) protein is Aspartate/glutamate leucyltransferase.